Reading from the N-terminus, the 176-residue chain is Large ribosomal subunit protein uL10 (176 aa).

It belongs to the universal ribosomal protein uL10 family. In terms of assembly, part of the ribosomal stalk of the 50S ribosomal subunit. The N-terminus interacts with L11 and the large rRNA to form the base of the stalk. The C-terminus forms an elongated spine to which L12 dimers bind in a sequential fashion forming a multimeric L10(L12)X complex.

Its function is as follows. Forms part of the ribosomal stalk, playing a central role in the interaction of the ribosome with GTP-bound translation factors. The chain is Large ribosomal subunit protein uL10 from Alcanivorax borkumensis (strain ATCC 700651 / DSM 11573 / NCIMB 13689 / SK2).